Here is a 294-residue protein sequence, read N- to C-terminus: MYKKILIILIIIIIVIISLIYLKNFILYQPHKDHPVKYCKFFHKLSKLTEPENIHHLYLKTPDNILLDTIVIRNTDTNKCIIYFHGNAGNIAMRYNIIKFLFNYASVIVFDYRSFGRSTGSFITMNQQDLSTDAETIWNYVIKNLHYNPNNISLFGESLGCSVAINLAVNISKNFDSKYYPHSLILNSPFYSLSEMVKSIFHKANLSQFGSVLSNLFREYQSDKLIPFMNQHTKIIIAHSHNDEIIPFEQGFKLYQLIANTHTNSKFIIINGSHNNPGLPDEYIYTLADLFNDW.

The chain crosses the membrane as a helical span at residues isoleucine 5–phenylalanine 25. N-linked (GlcNAc...) asparagine; by host glycans are attached at residues asparagine 151, asparagine 170, asparagine 205, and asparagine 271.

It is found in the membrane. This is an uncharacterized protein from Acanthamoeba polyphaga (Amoeba).